Here is a 413-residue protein sequence, read N- to C-terminus: Arginine biosynthesis bifunctional protein ArgJ (413 aa).

Threonine 163, lysine 189, threonine 200, glutamate 286, asparagine 408, and threonine 413 together coordinate substrate. The active-site Nucleophile is the threonine 200.

Belongs to the ArgJ family. In terms of assembly, heterotetramer of two alpha and two beta chains.

It localises to the cytoplasm. It catalyses the reaction N(2)-acetyl-L-ornithine + L-glutamate = N-acetyl-L-glutamate + L-ornithine. It carries out the reaction L-glutamate + acetyl-CoA = N-acetyl-L-glutamate + CoA + H(+). It participates in amino-acid biosynthesis; L-arginine biosynthesis; L-ornithine and N-acetyl-L-glutamate from L-glutamate and N(2)-acetyl-L-ornithine (cyclic): step 1/1. Its pathway is amino-acid biosynthesis; L-arginine biosynthesis; N(2)-acetyl-L-ornithine from L-glutamate: step 1/4. In terms of biological role, catalyzes two activities which are involved in the cyclic version of arginine biosynthesis: the synthesis of N-acetylglutamate from glutamate and acetyl-CoA as the acetyl donor, and of ornithine by transacetylation between N(2)-acetylornithine and glutamate. The protein is Arginine biosynthesis bifunctional protein ArgJ of Staphylococcus aureus (strain COL).